The primary structure comprises 250 residues: Cytochrome c oxidase subunit 2 (250 aa).

Over 1 to 27 (MGLLFNNLIMNFDAPSPWGIYFQDSAT) the chain is Mitochondrial intermembrane. The helical transmembrane segment at 28-61 (PQMEGLVELHDNIMYYLVVILFGVGWILLSIIRN) threads the bilayer. Residues 62–77 (YISTKSPISHKYLNHG) are Mitochondrial matrix-facing. The helical transmembrane segment at 78-107 (TLIELIWTITPAVILILIAFPSFKLLYLMD) threads the bilayer. Residues 108 to 250 (EVSDPSMSVL…EKFLTWLEEQ (143 aa)) are Mitochondrial intermembrane-facing. Cu cation contacts are provided by histidine 185, cysteine 220, glutamate 222, cysteine 224, histidine 228, and methionine 231. Residue glutamate 222 coordinates Mg(2+).

It belongs to the cytochrome c oxidase subunit 2 family. Component of the cytochrome c oxidase (complex IV, CIV), a multisubunit enzyme composed of 11 subunits. The complex is composed of a catalytic core of 3 subunits Cox1, Cox2 and Cox3, encoded in the mitochondrial DNA, and 8 supernumerary subunits Cox4, Cox5a/Cox5, Cox6, Cox7, Cox8, Cox7a/Cox9, Cox6b/Cox12 and Cox6a/Cox13, which are encoded in the nuclear genome. The complex exists as a monomer or a dimer and forms respiratory supercomplexes (SCs) in the inner mitochondrial membrane with NADH-ubiquinone oxidoreductase (complex I, CI) and ubiquinol-cytochrome c oxidoreductase (cytochrome b-c1 complex, complex III, CIII), resulting in various different assemblies (supercomplexes I(1)IV(1), I(1)III(3)IV(2), III(2)IV(1) and III(2)IV(2) as well as larger supercomplexes of compositions like I(1)III(2)IV(5-6)). Cu cation is required as a cofactor.

The protein resides in the mitochondrion inner membrane. The catalysed reaction is 4 Fe(II)-[cytochrome c] + O2 + 8 H(+)(in) = 4 Fe(III)-[cytochrome c] + 2 H2O + 4 H(+)(out). Its function is as follows. Component of the cytochrome c oxidase, the last enzyme in the mitochondrial electron transport chain which drives oxidative phosphorylation. The respiratory chain contains 3 multisubunit complexes succinate dehydrogenase (complex II, CII), ubiquinol-cytochrome c oxidoreductase (cytochrome b-c1 complex, complex III, CIII) and cytochrome c oxidase (complex IV, CIV), that cooperate to transfer electrons derived from NADH and succinate to molecular oxygen, creating an electrochemical gradient over the inner membrane that drives transmembrane transport and the ATP synthase. Cytochrome c oxidase is the component of the respiratory chain that catalyzes the reduction of oxygen to water. Electrons originating from reduced cytochrome c in the intermembrane space (IMS) are transferred via the dinuclear copper A center (CU(A)) of Cox2 and heme A of Cox1 to the active site in Cox1, a binuclear center (BNC) formed by heme A3 and copper B (CU(B)). The BNC reduces molecular oxygen to 2 water molecules using 4 electrons from cytochrome c in the IMS and 4 protons from the mitochondrial matrix. In Neurospora crassa (strain ATCC 24698 / 74-OR23-1A / CBS 708.71 / DSM 1257 / FGSC 987), this protein is Cytochrome c oxidase subunit 2 (cox-2).